The sequence spans 277 residues: Large ribosomal subunit protein uL2 (277 aa).

Disordered regions lie at residues 37-60 (KNSTAGRNSNGHITTRHKGGGHKH) and 223-265 (VVMN…KRTD). Polar residues predominate over residues 39 to 49 (STAGRNSNGHI). A compositionally biased stretch (basic residues) spans 50 to 60 (TTRHKGGGHKH). Positions 229-244 (DHPHGGGEGRTGEARE) are enriched in basic and acidic residues.

It belongs to the universal ribosomal protein uL2 family. In terms of assembly, part of the 50S ribosomal subunit. Forms a bridge to the 30S subunit in the 70S ribosome.

Its function is as follows. One of the primary rRNA binding proteins. Required for association of the 30S and 50S subunits to form the 70S ribosome, for tRNA binding and peptide bond formation. It has been suggested to have peptidyltransferase activity; this is somewhat controversial. Makes several contacts with the 16S rRNA in the 70S ribosome. The protein is Large ribosomal subunit protein uL2 of Neisseria meningitidis serogroup C (strain 053442).